Consider the following 214-residue polypeptide: ATP phosphoribosyltransferase (214 aa).

Belongs to the ATP phosphoribosyltransferase family. Short subfamily. Heteromultimer composed of HisG and HisZ subunits.

It is found in the cytoplasm. It carries out the reaction 1-(5-phospho-beta-D-ribosyl)-ATP + diphosphate = 5-phospho-alpha-D-ribose 1-diphosphate + ATP. It functions in the pathway amino-acid biosynthesis; L-histidine biosynthesis; L-histidine from 5-phospho-alpha-D-ribose 1-diphosphate: step 1/9. Its function is as follows. Catalyzes the condensation of ATP and 5-phosphoribose 1-diphosphate to form N'-(5'-phosphoribosyl)-ATP (PR-ATP). Has a crucial role in the pathway because the rate of histidine biosynthesis seems to be controlled primarily by regulation of HisG enzymatic activity. This is ATP phosphoribosyltransferase from Marinobacter nauticus (strain ATCC 700491 / DSM 11845 / VT8) (Marinobacter aquaeolei).